The following is a 298-amino-acid chain: Ribosomal protein L11 methyltransferase (298 aa).

S-adenosyl-L-methionine contacts are provided by T150, G171, D193, and N232.

This sequence belongs to the methyltransferase superfamily. PrmA family.

Its subcellular location is the cytoplasm. It catalyses the reaction L-lysyl-[protein] + 3 S-adenosyl-L-methionine = N(6),N(6),N(6)-trimethyl-L-lysyl-[protein] + 3 S-adenosyl-L-homocysteine + 3 H(+). Its function is as follows. Methylates ribosomal protein L11. In Chromobacterium violaceum (strain ATCC 12472 / DSM 30191 / JCM 1249 / CCUG 213 / NBRC 12614 / NCIMB 9131 / NCTC 9757 / MK), this protein is Ribosomal protein L11 methyltransferase.